Here is a 489-residue protein sequence, read N- to C-terminus: Betaine aldehyde dehydrogenase (489 aa).

Residues Thr-26 and Asp-93 each coordinate K(+). Gly-150–Trp-152 is a binding site for NAD(+). Lys-162 acts as the Charge relay system in catalysis. Residue Lys-176–Glu-179 coordinates NAD(+). Val-180 contacts K(+). Gly-229 to Thr-232 serves as a coordination point for NAD(+). Leu-245 contributes to the K(+) binding site. The Proton acceptor role is filled by Glu-251. Positions 253, 285, and 386 each coordinate NAD(+). Catalysis depends on Cys-285, which acts as the Nucleophile. Cys-285 is modified (cysteine sulfenic acid (-SOH)). Residues Lys-456 and Gly-459 each contribute to the K(+) site. The Charge relay system role is filled by Glu-463.

It belongs to the aldehyde dehydrogenase family. Dimer of dimers. Requires K(+) as cofactor.

It catalyses the reaction betaine aldehyde + NAD(+) + H2O = glycine betaine + NADH + 2 H(+). Its pathway is amine and polyamine biosynthesis; betaine biosynthesis via choline pathway; betaine from betaine aldehyde: step 1/1. Its function is as follows. Involved in the biosynthesis of the osmoprotectant glycine betaine. Catalyzes the irreversible oxidation of betaine aldehyde to the corresponding acid. This chain is Betaine aldehyde dehydrogenase, found in Burkholderia pseudomallei (strain K96243).